A 158-amino-acid chain; its full sequence is Snaclec jerdonuxin subunit alpha (158 aa).

The N-terminal stretch at 1–23 (MGRFTFVSFGLLVVFLSLSGTGA) is a signal peptide. Disulfide bonds link C27/C38, C55/C152, and C127/C144. The C-type lectin domain occupies 34–153 (YDRYCYQAFS…CGTENPFVCK (120 aa)).

The protein belongs to the snaclec family. Tetramer of 4 heterodimers of alpha and beta subunits; disulfide-linked. Expressed by the venom gland.

It localises to the secreted. Functionally, snaclec that strongly induces platelet aggregation, in a dose-dependent manner. The chain is Snaclec jerdonuxin subunit alpha from Protobothrops jerdonii (Jerdon's pitviper).